Reading from the N-terminus, the 30-residue chain is Cyclotide hyen-L (30 aa).

The cyclopeptide (Gly-Asn) cross-link spans 1–30; that stretch reads GIPCAESCVYIPCTVTALLGCSCSDKVCYN. 3 disulfide bridges follow: Cys4–Cys21, Cys8–Cys23, and Cys13–Cys28.

In terms of processing, this is a cyclic peptide. Detected in stems (at protein level).

Functionally, probably participates in a plant defense mechanism. Has cytotoxic activity against HUVEC cells (LC(50)= 2.26 uM) and various cancer cells including HeLa (LC(50)= 3.48 uM), MCF-7 and K562. Displays very weak hemolytic activity. Binds to and induces leakage in phospholipd membranes, particularly ones containing 1-palmitoyl-2-oleophosphatidylethanolamine (POPE). The sequence is that of Cyclotide hyen-L from Pigea enneasperma (Spade flower).